A 158-amino-acid polypeptide reads, in one-letter code: NADH-quinone oxidoreductase subunit B 2 (158 aa).

4 residues coordinate [4Fe-4S] cluster: Cys-37, Cys-38, Cys-102, and Cys-132.

This sequence belongs to the complex I 20 kDa subunit family. As to quaternary structure, NDH-1 is composed of 14 different subunits. Subunits NuoB, C, D, E, F, and G constitute the peripheral sector of the complex. [4Fe-4S] cluster is required as a cofactor.

The protein localises to the cell inner membrane. The enzyme catalyses a quinone + NADH + 5 H(+)(in) = a quinol + NAD(+) + 4 H(+)(out). Its function is as follows. NDH-1 shuttles electrons from NADH, via FMN and iron-sulfur (Fe-S) centers, to quinones in the respiratory chain. Couples the redox reaction to proton translocation (for every two electrons transferred, four hydrogen ions are translocated across the cytoplasmic membrane), and thus conserves the redox energy in a proton gradient. This is NADH-quinone oxidoreductase subunit B 2 from Nitrosospira multiformis (strain ATCC 25196 / NCIMB 11849 / C 71).